Here is a 374-residue protein sequence, read N- to C-terminus: Chaperone protein DnaJ (374 aa).

Residues 5–70 (DYYEVLGISR…SKRAAYDQFG (66 aa)) enclose the J domain. The CR-type zinc-finger motif lies at 129 to 207 (GKTVKINIPG…CHGQGRVRQE (79 aa)). Cysteine 142, cysteine 145, cysteine 159, cysteine 162, cysteine 181, cysteine 184, cysteine 195, and cysteine 198 together coordinate Zn(2+). CXXCXGXG motif repeat units follow at residues 142-149 (CEACDGSG), 159-166 (CGTCQGMG), 181-188 (CPTCRGSG), and 195-202 (CKSCHGQG). The disordered stretch occupies residues 216-238 (PGVDTGDRIRLSGEGEMGVDGGP).

The protein belongs to the DnaJ family. In terms of assembly, homodimer. Zn(2+) is required as a cofactor.

The protein resides in the cytoplasm. Participates actively in the response to hyperosmotic and heat shock by preventing the aggregation of stress-denatured proteins and by disaggregating proteins, also in an autonomous, DnaK-independent fashion. Unfolded proteins bind initially to DnaJ; upon interaction with the DnaJ-bound protein, DnaK hydrolyzes its bound ATP, resulting in the formation of a stable complex. GrpE releases ADP from DnaK; ATP binding to DnaK triggers the release of the substrate protein, thus completing the reaction cycle. Several rounds of ATP-dependent interactions between DnaJ, DnaK and GrpE are required for fully efficient folding. Also involved, together with DnaK and GrpE, in the DNA replication of plasmids through activation of initiation proteins. This is Chaperone protein DnaJ from Marinobacter nauticus (strain ATCC 700491 / DSM 11845 / VT8) (Marinobacter aquaeolei).